The primary structure comprises 229 residues: MSRNDARYLRCTAALGAAFFACGAAAAELTSPPVAPATEGVAAGLSPWQIRVRGLGVLTEDSGSINGVPGSDLSYSDSLIPELDISYFFTDNIAAELILGTTYANIKEVGAVGVPVGKAWLLPPTLTLQYHFTDFGAFKPYLGAGINYSLFYNQSEKAGFHDLDVDNHVGAALQVGFDYMVDEHWGVNFDVKKIFLETEWKADHDVLGPLSGKAKIDPWLIGAGVTYRF.

The first 26 residues, 1 to 26 (MSRNDARYLRCTAALGAAFFACGAAA), serve as a signal peptide directing secretion.

It belongs to the OmpW/AlkL family.

It localises to the cell outer membrane. This is an uncharacterized protein from Sinorhizobium fredii (strain NBRC 101917 / NGR234).